The primary structure comprises 79 residues: Small ribosomal subunit protein bS18 (79 aa).

Belongs to the bacterial ribosomal protein bS18 family. In terms of assembly, part of the 30S ribosomal subunit. Forms a tight heterodimer with protein bS6.

Its function is as follows. Binds as a heterodimer with protein bS6 to the central domain of the 16S rRNA, where it helps stabilize the platform of the 30S subunit. This chain is Small ribosomal subunit protein bS18, found in Streptococcus thermophilus (strain CNRZ 1066).